We begin with the raw amino-acid sequence, 344 residues long: MEENKRVRRKRYSGLYPKKYNEKYKEKNPEKYKETIQKVMKKGNTPAGMHRSIMVDEILHFFDIKLGQVGIDLTTGFGGHSKEILKKLNHTGHLHGIDQDPIELPKTRARLESYGFNKDNFTLHQLNFKDFDAIDTEGFDFILADLGVSSMQIDNPDRGFTFREEGPLDLRMNPNVGIPAYVRLLEMSEIEIEHMLIENADEIYAKEIAKEITKAKIQGRYIRTTLDLHQVIASALQKVSKKVYEEELKKASSRTFQALRIDVNSEYEVLFEMLDKLPGKLNPGGKVAILSFHSGEDRLVKKAFKQYLNDGVFSMTEGPILPSKEEVFNNPRARSAKLRIAIKG.

Residues 78–80 (GGH), aspartate 98, phenylalanine 131, aspartate 145, and glutamine 152 contribute to the S-adenosyl-L-methionine site.

It belongs to the methyltransferase superfamily. RsmH family.

It localises to the cytoplasm. The catalysed reaction is cytidine(1402) in 16S rRNA + S-adenosyl-L-methionine = N(4)-methylcytidine(1402) in 16S rRNA + S-adenosyl-L-homocysteine + H(+). Functionally, specifically methylates the N4 position of cytidine in position 1402 (C1402) of 16S rRNA. This chain is Ribosomal RNA small subunit methyltransferase H 2, found in Acholeplasma laidlawii (strain PG-8A).